A 352-amino-acid polypeptide reads, in one-letter code: MVKETKLYDLLGVSPSANEQELKKGYRKAALKYHPDKPTGDTEKFKEISEAFEILNDPQKREIYDQYGLEAARSGGPSFGPGGPGGAGGAGGFPGGAGGFSGGHAFSNEDAFNIFSQFFGGSSPFGGADDSGFSFSSYPSGGGAGMGGMPGGMGGMHGGMGGMPGGFRSASSSPTYPEEETVQVNLPVSLEDLFVGKKKSFKIGRKGPHGASEKTQIDIQLKPGWKAGTKITYKNQGDYNPQTGRRKTLQFVIQEKSHPNFKRDGDDLIYTLPLSFKESLLGFSKTIQTIDGRTLPLSRVQPVQPSQTSTYPGQGMPTPKNPSQRGNLIVKYKVDYPISLNDAQKRAIDENF.

Positions 4 to 70 (ETKLYDLLGV…REIYDQYGLE (67 aa)) constitute a J domain. Ser-275 is modified (phosphoserine). The tract at residues 300–325 (VQPVQPSQTSTYPGQGMPTPKNPSQR) is disordered. Residues 301-312 (QPVQPSQTSTYP) are compositionally biased toward polar residues.

As to quaternary structure, interacts with polyadenylate-binding protein PAB1.

The protein localises to the cytoplasm. It localises to the nucleus. Functionally, required for nuclear migration during mitosis. It is required for the normal initiation of translation. Might mediate the dissociation of a specific protein complex of the translation machinery. Essential for viability. This chain is Protein SIS1 (SIS1), found in Saccharomyces cerevisiae (strain ATCC 204508 / S288c) (Baker's yeast).